A 437-amino-acid polypeptide reads, in one-letter code: tRNA-2-methylthio-N(6)-dimethylallyladenosine synthase (437 aa).

Positions 1-115 (MKVYIETMGC…ISQVIHKEKA (115 aa)) constitute an MTTase N-terminal domain. [4Fe-4S] cluster-binding residues include Cys-10, Cys-46, Cys-78, Cys-148, Cys-152, and Cys-155. The Radical SAM core domain occupies 134-367 (KKAQIRSLLN…QNRHKEILEE (234 aa)). Residues 370–436 (KLEVGKTHVV…KGRLIATAKG (67 aa)) enclose the TRAM domain.

This sequence belongs to the methylthiotransferase family. MiaB subfamily. Monomer. The cofactor is [4Fe-4S] cluster.

The protein localises to the cytoplasm. The enzyme catalyses N(6)-dimethylallyladenosine(37) in tRNA + (sulfur carrier)-SH + AH2 + 2 S-adenosyl-L-methionine = 2-methylsulfanyl-N(6)-dimethylallyladenosine(37) in tRNA + (sulfur carrier)-H + 5'-deoxyadenosine + L-methionine + A + S-adenosyl-L-homocysteine + 2 H(+). In terms of biological role, catalyzes the methylthiolation of N6-(dimethylallyl)adenosine (i(6)A), leading to the formation of 2-methylthio-N6-(dimethylallyl)adenosine (ms(2)i(6)A) at position 37 in tRNAs that read codons beginning with uridine. This is tRNA-2-methylthio-N(6)-dimethylallyladenosine synthase from Helicobacter pylori (strain Shi470).